Consider the following 561-residue polypeptide: Urocanate hydratase (561 aa).

NAD(+) contacts are provided by residues 52-53, Q130, 176-178, E196, R201, 242-243, 267-271, 277-278, and Y326; these read GG, GMG, NA, QTSAH, and YL. Residue C414 is part of the active site. G496 contacts NAD(+).

It belongs to the urocanase family. The cofactor is NAD(+).

The protein localises to the cytoplasm. It catalyses the reaction 4-imidazolone-5-propanoate = trans-urocanate + H2O. Its pathway is amino-acid degradation; L-histidine degradation into L-glutamate; N-formimidoyl-L-glutamate from L-histidine: step 2/3. Its function is as follows. Catalyzes the conversion of urocanate to 4-imidazolone-5-propionate. The chain is Urocanate hydratase from Rhizobium rhizogenes (strain K84 / ATCC BAA-868) (Agrobacterium radiobacter).